We begin with the raw amino-acid sequence, 751 residues long: Semaphorin-3C (751 aa).

Residues 1-21 (MAVLALHAVFGIFIYFSSVKG) form the signal peptide. The 484-residue stretch at 28–511 (RVFLTFNELQ…SEEGVTQVPL (484 aa)) folds into the Sema domain. N-linked (GlcNAc...) asparagine glycosylation is present at Asn-81. A disulfide bridge links Cys-101 with Cys-112. A glycan (N-linked (GlcNAc...) asparagine) is linked at Asn-123. Intrachain disulfides connect Cys-130–Cys-139, Cys-266–Cys-378, and Cys-290–Cys-338. Asn-268 is a glycosylation site (N-linked (GlcNAc...) asparagine). Asn-465 carries N-linked (GlcNAc...) asparagine glycosylation. Cys-514 and Cys-532 form a disulfide bridge. One can recognise an Ig-like C2-type domain in the interval 571-655 (AYRNAAETVQ…TENNFKQTLA (85 aa)). Residues Asn-585 and Asn-586 are each glycosylated (N-linked (GlcNAc...) asparagine). Cysteines 643 and 709 form a disulfide. A compositionally biased stretch (basic and acidic residues) spans 712–731 (SRQQGQRREEPQKMRGDYSK). The interval 712–751 (SRQQGQRREEPQKMRGDYSKLKALINSRKSRNRRNQLPAS) is disordered.

This sequence belongs to the semaphorin family. Collapsin-1, -2, -3, and -5 bind to overlapping but distinct axon tracts.

The protein resides in the secreted. In terms of biological role, induces the collapse and paralysis of neuronal growth cones. Could potentially act as repulsive cues toward specific neuronal populations. Binds to neuropilin. The protein is Semaphorin-3C (SEMA3C) of Gallus gallus (Chicken).